A 539-amino-acid polypeptide reads, in one-letter code: 2,3-dihydroxybenzoate-AMP ligase (539 aa).

Gly191 provides a ligand contact to ATP. Substrate is bound by residues 234–235 and Ser240; that span reads HN. ATP contacts are provided by Gly307, Val329, Asp413, Arg428, and Lys519. Lys519 provides a ligand contact to substrate.

This sequence belongs to the ATP-dependent AMP-binding enzyme family.

It localises to the cytoplasm. The catalysed reaction is 2,3-dihydroxybenzoate + holo-[ACP] + ATP = 2,3-dihydroxybenzoyl-[ACP] + AMP + diphosphate. It participates in siderophore biosynthesis; bacillibactin biosynthesis. In terms of biological role, involved in the biosynthesis of the catecholic siderophore bacillibactin. Catalyzes the activation of the carboxylate group of 2,3-dihydroxy-benzoate (DHB), via ATP-dependent PPi exchange reactions, to the acyladenylate. The sequence is that of 2,3-dihydroxybenzoate-AMP ligase from Bacillus subtilis (strain 168).